Here is a 238-residue protein sequence, read N- to C-terminus: Orotate phosphoribosyltransferase (238 aa).

Lys-29 provides a ligand contact to 5-phospho-alpha-D-ribose 1-diphosphate. 37-38 (FF) lines the orotate pocket. Residues 87-88 (YK), Arg-118, Lys-119, Lys-122, His-124, and 144-152 (DDVITAGTA) each bind 5-phospho-alpha-D-ribose 1-diphosphate. Residues Thr-148 and Arg-176 each contribute to the orotate site.

Belongs to the purine/pyrimidine phosphoribosyltransferase family. PyrE subfamily. As to quaternary structure, homodimer.

The enzyme catalyses orotidine 5'-phosphate + diphosphate = orotate + 5-phospho-alpha-D-ribose 1-diphosphate. It functions in the pathway pyrimidine metabolism; UMP biosynthesis via de novo pathway; UMP from orotate: step 1/2. Its function is as follows. Catalyzes the transfer of a ribosyl phosphate group from 5-phosphoribose 1-diphosphate to orotate, leading to the formation of orotidine monophosphate (OMP). The sequence is that of Orotate phosphoribosyltransferase (URA5) from Coccidioides immitis (strain RS) (Valley fever fungus).